A 227-amino-acid chain; its full sequence is Cytochrome c oxidase subunit 2 (227 aa).

The Mitochondrial intermembrane segment spans residues Met-1–Ser-14. Residues Pro-15–Met-45 form a helical membrane-spanning segment. Residues Leu-46–Gln-59 lie on the Mitochondrial matrix side of the membrane. Residues Glu-60–Met-87 traverse the membrane as a helical segment. Topologically, residues Asp-88 to Leu-227 are mitochondrial intermembrane. Positions 161, 196, 198, 200, 204, and 207 each coordinate Cu cation. Glu-198 contributes to the Mg(2+) binding site.

It belongs to the cytochrome c oxidase subunit 2 family. As to quaternary structure, component of the cytochrome c oxidase (complex IV, CIV), a multisubunit enzyme composed of 14 subunits. The complex is composed of a catalytic core of 3 subunits MT-CO1, MT-CO2 and MT-CO3, encoded in the mitochondrial DNA, and 11 supernumerary subunits COX4I, COX5A, COX5B, COX6A, COX6B, COX6C, COX7A, COX7B, COX7C, COX8 and NDUFA4, which are encoded in the nuclear genome. The complex exists as a monomer or a dimer and forms supercomplexes (SCs) in the inner mitochondrial membrane with NADH-ubiquinone oxidoreductase (complex I, CI) and ubiquinol-cytochrome c oxidoreductase (cytochrome b-c1 complex, complex III, CIII), resulting in different assemblies (supercomplex SCI(1)III(2)IV(1) and megacomplex MCI(2)III(2)IV(2)). Found in a complex with TMEM177, COA6, COX18, COX20, SCO1 and SCO2. Interacts with TMEM177 in a COX20-dependent manner. Interacts with COX20. Interacts with COX16. Cu cation is required as a cofactor.

It localises to the mitochondrion inner membrane. The enzyme catalyses 4 Fe(II)-[cytochrome c] + O2 + 8 H(+)(in) = 4 Fe(III)-[cytochrome c] + 2 H2O + 4 H(+)(out). Its function is as follows. Component of the cytochrome c oxidase, the last enzyme in the mitochondrial electron transport chain which drives oxidative phosphorylation. The respiratory chain contains 3 multisubunit complexes succinate dehydrogenase (complex II, CII), ubiquinol-cytochrome c oxidoreductase (cytochrome b-c1 complex, complex III, CIII) and cytochrome c oxidase (complex IV, CIV), that cooperate to transfer electrons derived from NADH and succinate to molecular oxygen, creating an electrochemical gradient over the inner membrane that drives transmembrane transport and the ATP synthase. Cytochrome c oxidase is the component of the respiratory chain that catalyzes the reduction of oxygen to water. Electrons originating from reduced cytochrome c in the intermembrane space (IMS) are transferred via the dinuclear copper A center (CU(A)) of subunit 2 and heme A of subunit 1 to the active site in subunit 1, a binuclear center (BNC) formed by heme A3 and copper B (CU(B)). The BNC reduces molecular oxygen to 2 water molecules using 4 electrons from cytochrome c in the IMS and 4 protons from the mitochondrial matrix. This is Cytochrome c oxidase subunit 2 (MT-CO2) from Tamias merriami (Merriam's chipmunk).